The sequence spans 1504 residues: Nischarin (1504 aa).

Alanine 2 bears the N-acetylalanine mark. The tract at residues 2 to 133 (ATARTFGPER…GITAALAEEL (132 aa)) is necessary for binding to phosphoinositide-3-P; not sufficient for targeting to endosomes. In terms of domain architecture, PX spans 11–121 (REAEPAKEAR…AHFLHFHFYE (111 aa)). Residues 120-695 (YEINGITAAL…ERLALEWALG (576 aa)) form a necessary for homooligomerization and targeting to endosomes region. Residues 245–869 (LSVRFSATSM…LVYSDKRMVQ (625 aa)) are interaction with PAK1. LRR repeat units follow at residues 288–309 (ALTT…VKLI), 311–332 (KIEF…QHLY), 333–354 (NLVH…HTKL), 356–377 (NIKT…HKLY), 378–399 (SLVN…RSIG), and 403–424 (CLEH…RTKV). A compositionally biased stretch (basic and acidic residues) spans 463 to 478 (KSKLSNPEKKGGEDSR). Disordered regions lie at residues 463 to 501 (KSKL…SASL), 524 to 547 (SSTD…LESI), 554 to 573 (SDDL…EHAE), and 628 to 687 (REEG…EEER). Phosphoserine is present on residues serine 541, serine 543, and serine 546. A coiled-coil region spans residues 634 to 695 (EQGEEEDEEE…ERLALEWALG (62 aa)). 2 stretches are compositionally biased toward acidic residues: residues 635 to 649 (QGEE…EEDV) and 661 to 685 (DVEE…EAEE). Residues 660–869 (PDVEEEEGGG…LVYSDKRMVQ (210 aa)) are interaction with LIMK. The interval 709–807 (KVLWCFLIHV…ANLHEFHADL (99 aa)) is interaction with ITGA5. The interval 1016-1104 (TPGTGGSPQG…PAPPPAEAPA (89 aa)) is disordered. Serine 1022 bears the Phosphoserine mark. The segment covering 1032 to 1043 (PAERRASNDQRP) has biased composition (basic and acidic residues). Over residues 1063–1078 (PAAASASGPAKTPAPA) the composition is skewed to low complexity. Threonine 1282 carries the post-translational modification Phosphothreonine. Serine 1284 bears the Phosphoserine mark.

As to quaternary structure, homooligomer. Interacts with GRB2. Interacts with PIK3R1; probably associates with the PI3-kinase complex. Interacts with IRS4. Found in a complex with ITGA5 and PAK1. Found in a complex with LIMK1 and PAK1. Interacts with ITGA5 (via cytoplasmic domain); this interaction is direct. Interacts with PAK1 (via kinase domain); this interaction is direct and is increased upon activation of PAK1. Interacts with LIMK1 (via PDZ and kinase domain); this interaction is direct. Interacts with LIMK2; this interaction depends on LIMK2 activity. Interacts with RAC1 (activated state). Interacts with STK11; this interaction may increase STK11 activity. Isoform 1, isoform 3 and isoform 4 are expressed in brain. Isoform 1 is expressed in endocrine tissues.

The protein localises to the cell membrane. It is found in the cytoplasm. The protein resides in the early endosome. It localises to the recycling endosome. Its function is as follows. Acts either as the functional imidazoline-1 receptor (I1R) candidate or as a membrane-associated mediator of the I1R signaling. Binds numerous imidazoline ligands that induces initiation of cell-signaling cascades triggering to cell survival, growth and migration. Its activation by the agonist rilmenidine induces an increase in phosphorylation of mitogen-activated protein kinases MAPK1 and MAPK3 in rostral ventrolateral medulla (RVLM) neurons that exhibited rilmenidine-evoked hypotension. Blocking its activation with efaroxan abolished rilmenidine-induced mitogen-activated protein kinase phosphorylation in RVLM neurons. Acts as a modulator of Rac-regulated signal transduction pathways. Suppresses Rac1-stimulated cell migration by interacting with PAK1 and inhibiting its kinase activity. Also blocks Pak-independent Rac signaling by interacting with RAC1 and inhibiting Rac1-stimulated NF-kB response element and cyclin D1 promoter activation. Also inhibits LIMK1 kinase activity by reducing LIMK1 'Tyr-508' phosphorylation. Inhibits Rac-induced cell migration and invasion in breast and colon epithelial cells. Inhibits lamellipodia formation, when overexpressed. Plays a role in protection against apoptosis. Involved in association with IRS4 in the enhancement of insulin activation of MAPK1 and MAPK3. When overexpressed, induces a redistribution of cell surface ITGA5 integrin to intracellular endosomal structures. This Homo sapiens (Human) protein is Nischarin (NISCH).